Reading from the N-terminus, the 453-residue chain is Chromosomal replication initiator protein DnaA (453 aa).

The domain I, interacts with DnaA modulators stretch occupies residues Met-1–Leu-75. The tract at residues Leu-75–Thr-114 is domain II. Basic and acidic residues predominate over residues Lys-87–Ser-103. Residues Lys-87–His-112 form a disordered region. The tract at residues Trp-115–Ser-331 is domain III, AAA+ region. ATP contacts are provided by Gly-159, Gly-161, Lys-162, and Thr-163. Residues Ser-332 to Asp-453 are domain IV, binds dsDNA.

Belongs to the DnaA family. Oligomerizes as a right-handed, spiral filament on DNA at oriC.

Its subcellular location is the cytoplasm. In terms of biological role, plays an essential role in the initiation and regulation of chromosomal replication. ATP-DnaA binds to the origin of replication (oriC) to initiate formation of the DNA replication initiation complex once per cell cycle. Binds the DnaA box (a 9 base pair repeat at the origin) and separates the double-stranded (ds)DNA. Forms a right-handed helical filament on oriC DNA; dsDNA binds to the exterior of the filament while single-stranded (ss)DNA is stabiized in the filament's interior. The ATP-DnaA-oriC complex binds and stabilizes one strand of the AT-rich DNA unwinding element (DUE), permitting loading of DNA polymerase. After initiation quickly degrades to an ADP-DnaA complex that is not apt for DNA replication. Binds acidic phospholipids. This chain is Chromosomal replication initiator protein DnaA, found in Natranaerobius thermophilus (strain ATCC BAA-1301 / DSM 18059 / JW/NM-WN-LF).